We begin with the raw amino-acid sequence, 410 residues long: 45 kDa immediate-early protein 2 (410 aa).

The segment at 36–166 is disordered; the sequence is SEEEQGEEVE…SKRISELDNE (131 aa). Composition is skewed to low complexity over residues 47–67, 90–101, and 132–147; these read RGAT…TSPT, SSSSSSCSSASD, and AASS…SSGG. Residues 257–283 fold into a zinc finger; that stretch reads VRCRLGTMCNLALSTPFLMEHTMPVTH.

Its function is as follows. Activates the E1.7 promoter. This activation is augmented by the IE1 protein. It down-regulates the transcription of genes under the control of the major IE promoter. This is 45 kDa immediate-early protein 2 (UL122) from Homo sapiens (Human).